The primary structure comprises 104 residues: Gastrin (104 aa).

The signal sequence occupies residues methionine 1–alanine 21. The propeptide occupies serine 22 to arginine 58. Residues phenylalanine 27–histidine 67 form a disordered region. Basic and acidic residues predominate over residues arginine 40–arginine 49. Glutamine 59 carries the post-translational modification Pyrrolidone carboxylic acid; in form big gastrin. Glutamine 76 bears the Pyrrolidone carboxylic acid; in form gastrin mark. A Sulfotyrosine; partial modification is found at tyrosine 87. Phenylalanine 92 is subject to Phenylalanine amide. Phosphoserine is present on serine 96. The propeptide occupies serine 96–proline 104.

This sequence belongs to the gastrin/cholecystokinin family. Sulfation enhances proteolytic processing, and blocks peptide degradation. Levels of sulfation differ between proteolytically-cleaved gastrins. Thus, gastrin-6 is almost 73% sulfated, whereas the larger gastrins are less than 50% sulfated. Sulfation levels are also tissue-specific.

It is found in the secreted. Its function is as follows. Gastrin stimulates the stomach mucosa to produce and secrete hydrochloric acid and the pancreas to secrete its digestive enzymes. It also stimulates smooth muscle contraction and increases blood circulation and water secretion in the stomach and intestine. This chain is Gastrin (GAST), found in Sus scrofa (Pig).